Consider the following 153-residue polypeptide: Acylphosphatase-like protein MJ0553 (153 aa).

Positions 4–102 (TYELIIYGRV…SRLSSDDILE (99 aa)) constitute an Acylphosphatase-like domain.

The sequence is that of Acylphosphatase-like protein MJ0553 from Methanocaldococcus jannaschii (strain ATCC 43067 / DSM 2661 / JAL-1 / JCM 10045 / NBRC 100440) (Methanococcus jannaschii).